A 79-amino-acid chain; its full sequence is Small ribosomal subunit protein bS18 (79 aa).

This sequence belongs to the bacterial ribosomal protein bS18 family. As to quaternary structure, part of the 30S ribosomal subunit. Forms a tight heterodimer with protein bS6.

Its function is as follows. Binds as a heterodimer with protein bS6 to the central domain of the 16S rRNA, where it helps stabilize the platform of the 30S subunit. The chain is Small ribosomal subunit protein bS18 from Bradyrhizobium sp. (strain BTAi1 / ATCC BAA-1182).